The sequence spans 517 residues: Ribosome assembly protein 4 (517 aa).

Residues 1-25 (MATLAPPPSKRQRREEIQRTQTQQD) are disordered. Residues 34 to 128 (LGSFKANFID…TITLSAEPQA (95 aa)) form a ubiquitin-like (UBL) domain region. WD repeat units follow at residues 144–184 (GHGQ…PKFT), 187–226 (GHTGWVLGVSWSPDGKYLATCSMDTTVRVWDPESGKQVNQ), 230–277 (GHAK…HVLS), 278–316 (GHKGSVSCVKWGGTDLIYTGSHDRSVRVWDAVKGTLVHN), 351–397 (EERR…SKPV), 402–441 (GHQNKVNHVQFSPDGTLIASAGWDNSTKLWNARDGKFIKN), 444–483 (GHVAPVYQCAWSADSRLVVTGSKDCTLKVWNVRTGKLAMD), and 486–517 (GHEDEVYAVDWAADGELVASGGKDKAVRTWRN).

Belongs to the NLE1/RSA4 family. As to quaternary structure, associates with the pre-60S ribosomal particle. Interacts (via WD repeats) with uL18. Interacts (via UBL domain) with MDN1 (via VWFA/MIDAS domain). Interacts (via WD repeats) with NSA2.

Its subcellular location is the nucleus. It is found in the nucleolus. Involved in ribosome biogenesis. Required for processing and efficient intra-nuclear transport of pre-60S ribosomal subunits. Interacts with the AAA-ATPase Midasin, which is essential for the ATP-dependent dissociation of a group of nonribosomal factors from the pre-60S particle. This chain is Ribosome assembly protein 4, found in Chaetomium thermophilum (strain DSM 1495 / CBS 144.50 / IMI 039719) (Thermochaetoides thermophila).